A 970-amino-acid chain; its full sequence is Pentatricopeptide repeat-containing protein At1g18485 (970 aa).

PPR repeat units follow at residues 119–149 (DDVLCTRIITMYAMCGSPDDSRFVFDALRSK), 150–185 (NLFQWNAVISSYSRNELYDEVLETFIEMISTTDLLP), 186–220 (DHFTYPCVIKACAGMSDVGIGLAVHGLVVKTGLVE), 221–251 (DVFVGNALVSFYGTHGFVTDALQLFDIMPER), 252–282 (NLVSWNSMIRVFSDNGFSEESFLLLGEMMEE), 291–325 (DVATLVTVLPVCAREREIGLGKGVHGWAVKLRLDK), 326–356 (ELVLNNALMDMYSKCGCITNAQMIFKMNNNK), 357–391 (NVVSWNTMVGGFSAEGDTHGTFDVLRQMLAGGEDV), 394–428 (DEVTILNAVPVCFHESFLPSLKELHCYSLKQEFVY), 429–459 (NELVANAFVASYAKCGSLSYAQRVFHGIRSK), 460–494 (TVNSWNALIGGHAQSNDPRLSLDAHLQMKISGLLP), 495–529 (DSFTVCSLLSACSKLKSLRLGKEVHGFIIRNWLER), 530–560 (DLFVYLSVLSLYIHCGELCTVQALFDAMEDK), 561–595 (SLVSWNTVITGYLQNGFPDRALGVFRQMVLYGIQL), 597–630 (GISMMPVFGACSLLPSLRLGREAHAYALKHLLED), 631–661 (DAFIACSLIDMYAKNGSITQSSKVFNGLKEK), 662–696 (STASWNAMIMGYGIHGLAKEAIKLFEEMQRTGHNP), 697–727 (DDLTFLGVLTACNHSGLIHEGLRYLDQMKSS), and 733–764 (NLKHYACVIDMLGRAGQLDKALRVVAEEMSEE). The segment at 770-845 (WKSLLSSCRI…AGCSWIELNR (76 aa)) is type E motif. Positions 846–875 (KVFSFVVGERFLDGFEEIKSLWSILEMKIS) are type E(+) motif. A type DYW motif region spans residues 876 to 970 (KMGYRPDTMS…NGVCSCGDYW (95 aa)).

Belongs to the PPR family. PCMP-H subfamily.

This Arabidopsis thaliana (Mouse-ear cress) protein is Pentatricopeptide repeat-containing protein At1g18485 (PCMP-H8).